The following is a 262-amino-acid chain: LOB domain-containing protein 18 (262 aa).

Residues 36–138 (GPCGACKFLR…AEVSYLQAHL (103 aa)) enclose the LOB domain. Residues 223–262 (VGLGGENSHDLQALAHELLHRQGSPPPAATDHSPSRTMSR) form a disordered region.

This sequence belongs to the LOB domain-containing protein family. As to quaternary structure, homodimer and heterodimer with LBD16. Interacts with GIP1. Expressed in roots, stems, leaves and flowers. Expressed in vascular tissues of hypocotyls, leaves, roots, developing floral organs and siliques.

The protein resides in the nucleus. Its function is as follows. Involved in the positive regulation of tracheary element (TE) differentiation. Involved in a positive feedback loop that maintains or promotes NAC030/VND7 expression that regulates TE differentiation-related genes. Functions in the initiation and emergence of lateral roots, in conjunction with LBD16, downstream of ARF7 and ARF19. Transcriptional activator that directly regulates EXPA14, a gene encoding a cell wall-loosening factor that promotes lateral root emergence. Activates EXPA14 by directly binding to a specific region of its promoter. Transcriptional activator that directly regulates EXPA17, a gene encoding a cell wall-loosening factor that promotes lateral root emergence. Acts downstream of the auxin influx carriers AUX1 and LAX1 in the regulation of lateral root initiation and development. This chain is LOB domain-containing protein 18 (LBD18), found in Arabidopsis thaliana (Mouse-ear cress).